Reading from the N-terminus, the 64-residue chain is Large ribosomal subunit protein uL30 (64 aa).

This sequence belongs to the universal ribosomal protein uL30 family. In terms of assembly, part of the 50S ribosomal subunit.

This chain is Large ribosomal subunit protein uL30, found in Beijerinckia indica subsp. indica (strain ATCC 9039 / DSM 1715 / NCIMB 8712).